The sequence spans 212 residues: Prolactin-3C1 (212 aa).

The signal sequence occupies residues 1-29 (MQLSLTQARTWKGLFLLVSCMFLWVYVTA). The cysteines at positions 80 and 188 are disulfide-linked. N-linked (GlcNAc...) asparagine glycosylation occurs at N100.

This sequence belongs to the somatotropin/prolactin family. In terms of tissue distribution, expressed exclusively in decidua.

Its subcellular location is the secreted. The chain is Prolactin-3C1 (Prl3c1) from Mus musculus (Mouse).